A 719-amino-acid chain; its full sequence is Eukaryotic translation initiation factor 3 subunit B (719 aa).

In terms of domain architecture, RRM spans 60 to 147 (NILVVDNLPV…HIFAVNMFDD (88 aa)). WD repeat units follow at residues 167-207 (VPGE…KPEL), 511-553 (LKGK…TMAS), and 555-598 (EHFM…LYRI). The span at 675 to 686 (EKMERQKLRDGE) shows a compositional bias: basic and acidic residues. Residues 675–698 (EKMERQKLRDGEASDEEEEYEAKE) are disordered. A compositionally biased stretch (acidic residues) spans 687–698 (ASDEEEEYEAKE).

It belongs to the eIF-3 subunit B family. As to quaternary structure, component of the eukaryotic translation initiation factor 3 (eIF-3) complex.

The protein localises to the cytoplasm. RNA-binding component of the eukaryotic translation initiation factor 3 (eIF-3) complex, which is involved in protein synthesis of a specialized repertoire of mRNAs and, together with other initiation factors, stimulates binding of mRNA and methionyl-tRNAi to the 40S ribosome. The eIF-3 complex specifically targets and initiates translation of a subset of mRNAs involved in cell proliferation. The chain is Eukaryotic translation initiation factor 3 subunit B (TIF3B1) from Nicotiana tabacum (Common tobacco).